The sequence spans 501 residues: ATP synthase subunit alpha (501 aa).

169-176 (GDRQTGKT) is a binding site for ATP.

It belongs to the ATPase alpha/beta chains family. As to quaternary structure, F-type ATPases have 2 components, CF(1) - the catalytic core - and CF(0) - the membrane proton channel. CF(1) has five subunits: alpha(3), beta(3), gamma(1), delta(1), epsilon(1). CF(0) has three main subunits: a(1), b(2) and c(9-12). The alpha and beta chains form an alternating ring which encloses part of the gamma chain. CF(1) is attached to CF(0) by a central stalk formed by the gamma and epsilon chains, while a peripheral stalk is formed by the delta and b chains.

It localises to the cell membrane. It carries out the reaction ATP + H2O + 4 H(+)(in) = ADP + phosphate + 5 H(+)(out). In terms of biological role, produces ATP from ADP in the presence of a proton gradient across the membrane. The alpha chain is a regulatory subunit. This is ATP synthase subunit alpha from Streptococcus pneumoniae serotype 19F (strain G54).